A 494-amino-acid chain; its full sequence is MIKFALALTLCLAGASLSLAQHNPRWWGNRNTIVHLFEWKWSDIAEECETFLAPRGFAGVQVSPVNENIISAGRPWWERYQPISYKLTTRSGNEEEFADMVRRCNDVGIRIYVDVLLNHMSGDFDGVAVGTAGTEAEPSKKSFPGVPYTAQDFHPSCEITDWNNRFQVQECELVGLKDLNQHSDYVRSKLIEFLDHLIELGVAGFRVDAAKHMAAVDLEYIYGSLSNLNIEHGFPHNARPFIFQEVIDHGHETVSREEYNELGAVTEFRFSEEIGKAFRGNNALKWLQSWGTDWGFLNSDQALTFVDNHDNQRDQGSVLNYKSPRQYKMATAFHLAYPYGISRVMSSFAFDDHDTPPPQDAQENIISPEFDEDGACVNGWICEHRWRQIYAMVGFKNAVRDTELSGWWDNGDNQISFCRGNKGFLAVNNNLYDLSQELNTCLPAGEYCDVISGSLVDGACTGKSVTVNEHGYGYIHIGSDDFDGVLALHVNAKV.

The signal sequence occupies residues 1–20 (MIKFALALTLCLAGASLSLA). Gln21 carries the post-translational modification Pyrrolidone carboxylic acid. Cys48 and Cys104 are joined by a disulfide. Asn118, Gln169, and Asp178 together coordinate Ca(2+). A disulfide bridge links Cys157 with Cys171. Position 206 (Arg206) interacts with chloride. Asp208 (nucleophile) is an active-site residue. Residue His212 participates in Ca(2+) binding. Glu245 acts as the Proton donor in catalysis. Residues Asn308 and Arg343 each coordinate chloride. 3 cysteine pairs are disulfide-bonded: Cys376-Cys382, Cys418-Cys441, and Cys448-Cys460.

Belongs to the glycosyl hydrolase 13 family. Monomer. Requires Ca(2+) as cofactor. It depends on chloride as a cofactor.

It is found in the secreted. The catalysed reaction is Endohydrolysis of (1-&gt;4)-alpha-D-glucosidic linkages in polysaccharides containing three or more (1-&gt;4)-alpha-linked D-glucose units.. This Drosophila bakoue (Fruit fly) protein is Alpha-amylase-related protein (Amyrel).